A 143-amino-acid polypeptide reads, in one-letter code: Boletus edulis lectin (143 aa).

Beta-D-Gal-(1-&gt;3)-alpha-D-GalNAc contacts are provided by residues Ala30, 49-50 (SG), and 72-73 (HN). N-acetyl-alpha-D-galactosamine is bound by residues 49-50 (SG) and 72-73 (HN). N,N'-diacetylchitobiose contacts are provided by residues 79-82 (DVVT), Arg103, and Tyr114. N-acetyl-alpha-D-glucosamine-binding positions include 79-82 (DVVT), Arg103, and Tyr114.

It belongs to the fungal fruit body lectin family. As to quaternary structure, homotetramer.

In terms of biological role, lectin that recognizes O-linked galactose-beta-1,3-N-acetylgalactosamine, a disaccharide (Thomsen-Friedenreich antigen or T-disaccharide), present on cell surface glycoproteins. Can also bind chitin, N,N'-diacetylchitobiose, N-acetylgalactosamine and N-acetylglucosamine. Inhibits proliferation of colon, breast and liver cancer cell lines (in vitro). This is Boletus edulis lectin from Boletus edulis (King bolete).